The primary structure comprises 137 residues: MRTLWIMAVLLVGVEGSLFELGKMILQETGKNPAKSYGAYGCNCGVLGRGKPKDATDRCCYVHKCCYKKLTGCNPKKDRYSYSWKDKTIVCGENNSCLKELCECDKAVAICLRENLNTYNKKYRYYLKPLCKKADAC.

The first 16 residues, 1–16 (MRTLWIMAVLLVGVEG), serve as a signal peptide directing secretion. 7 cysteine pairs are disulfide-bonded: C42-C131, C44-C60, C59-C111, C65-C137, C66-C104, C73-C97, and C91-C102. Positions 121 to 133 (KKYRYYLKPLCKK) are important for membrane-damaging activities in eukaryotes and bacteria; heparin-binding.

Belongs to the phospholipase A2 family. Group II subfamily. K49 sub-subfamily. In terms of assembly, homodimer; non-covalently linked. Binds to heparin. Post-translationally, it binds long-chain fatty acids covalently by a rapid, spontaneous, and autocatalytic process. When acylated, it binds to the surface of liposomes and isolated muscle membranes, with the fatty acid moiety inserted into the lipid bilayer and possibly acting as an anchor. As to expression, expressed by the venom gland.

Its subcellular location is the secreted. With respect to regulation, heparin inhibits the myotoxic activity. Suramin inhibits the myotoxic activity. High level of membrane cholesterol content reduces cytolytic activity, whereas low level of membrane cholesterol content increases cytolytic activity. Snake venom phospholipase A2 homolog that lacks enzymatic activity. Is myotoxic and induces a dose-dependent edema in the mouse foot pad. Also exhibits strong anticoagulant effects by binding to factor Xa (F10) and inhibiting the prothrombinase activity (IC(50) is 3 nM). In addition, it shows cytotoxic activity to a variety of cell types and bactericidal activity to a variety of Gram-negative and Gram-positive bacteria. Also induces a very rapid release of large amounts of potassium ions and ATP from muscle cells, which accounts for the pain reaction characteristic of viperid envenomations. The released ATP amplifies the effect of the myotoxins, acting as a 'danger signal', which spreads and causes further damage by acting on purinergic receptors. A model of myotoxic mechanism has been proposed: an apo Lys49-PLA2 is activated by the entrance of a hydrophobic molecule (e.g. fatty acid) at the hydrophobic channel of the protein leading to a reorientation of a monomer. This reorientation causes a transition between 'inactive' to 'active' states, causing alignment of C-terminal and membrane-docking sites (MDoS) side-by-side and putting the membrane-disruption sites (MDiS) in the same plane, exposed to solvent and in a symmetric position for both monomers. The MDoS region stabilizes the toxin on membrane by the interaction of charged residues with phospholipid head groups. Subsequently, the MDiS region destabilizes the membrane with penetration of hydrophobic residues. This insertion causes a disorganization of the membrane, allowing an uncontrolled influx of ions (i.e. calcium and sodium), and eventually triggering irreversible intracellular alterations and cell death. The polypeptide is Basic phospholipase A2 homolog 2 (Bothrops asper (Terciopelo)).